An 848-amino-acid polypeptide reads, in one-letter code: Aryl hydrocarbon receptor (848 aa).

Residues 1-9 (MSSGANITY) constitute a propeptide that is removed on maturation. Residues 1–38 (MSSGANITYASRKRRKPVQKTVKPIPAEGIKSNPSKRH) are disordered. 2 short sequence motifs (nuclear localization signal) span residues 12-15 (RKRR) and 36-41 (KRHRDR). In terms of domain architecture, bHLH spans 26–79 (PAEGIKSNPSKRHRDRLNTELDRLASLLPFPQDVINKLDKLSVLRLSVSYLRAK). The interval 37–65 (RHRDRLNTELDRLASLLPFPQDVINKLDK) is DNA-binding. Required for maintaining the overall integrity of the AHR:ARNT heterodimer and its transcriptional activity stretches follow at residues 49 to 81 (LASL…AKSF), 116 to 124 (LLQALNGFV), and 260 to 262 (FAI). The Nuclear export signal signature appears at 63-71 (LDKLSVLRL). Residues 111–175 (QEGEFLLQAL…AEFQRQLHWA (65 aa)) form the PAS 1 domain. Residues 266-336 (LQPPSILEIR…CAESHIRMIK (71 aa)) enclose the PAS 2 domain. Positions 342 to 383 (MTVFRLLAKHSRWRWVQSNARLIYRNGRPDYIIVTQRPLTDE) constitute a PAC domain. The tract at residues 421–449 (LPIRTKSNTSRKDWAPQSTPSKDSFHPSS) is disordered. Residues 436 to 449 (PQSTPSKDSFHPSS) show a composition bias toward polar residues.

As to quaternary structure, homodimer. Heterodimer; efficient DNA binding requires dimerization with another bHLH protein. Interacts with ARNT; the heterodimer ARNT:AHR binds to core DNA sequence 5'-TGCGTG-3' within the dioxin response element (DRE) of target gene promoters and activates their transcription. Binds MYBBP1A. Interacts with coactivators including SRC-1, RIP140 and NOCA7, and with the corepressor SMRT. Interacts with NEDD8 and IVNS1ABP. Interacts with BMAL1. Interacts with HSP90AB1. Interacts with TIPARP; leading to mono-ADP-ribosylation of AHR and subsequent inhibition of AHR. In terms of processing, mono-ADP-ribosylated, leading to inhibit transcription activator activity of AHR.

It localises to the cytoplasm. The protein localises to the nucleus. Its function is as follows. Ligand-activated transcription factor that enables cells to adapt to changing conditions by sensing compounds from the environment, diet, microbiome and cellular metabolism, and which plays important roles in development, immunity and cancer. Upon ligand binding, translocates into the nucleus, where it heterodimerizes with ARNT and induces transcription by binding to xenobiotic response elements (XRE). Regulates a variety of biological processes, including angiogenesis, hematopoiesis, drug and lipid metabolism, cell motility and immune modulation. Xenobiotics can act as ligands: upon xenobiotic-binding, activates the expression of multiple phase I and II xenobiotic chemical metabolizing enzyme genes (such as the CYP1A1 gene). Mediates biochemical and toxic effects of halogenated aromatic hydrocarbons. Next to xenobiotics, natural ligands derived from plants, microbiota, and endogenous metabolism are potent AHR agonists. Tryptophan (Trp) derivatives constitute an important class of endogenous AHR ligands. Acts as a negative regulator of anti-tumor immunity: indoles and kynurenic acid generated by Trp catabolism act as ligand and activate AHR, thereby promoting AHR-driven cancer cell motility and suppressing adaptive immunity. Regulates the circadian clock by inhibiting the basal and circadian expression of the core circadian component PER1. Inhibits PER1 by repressing the CLOCK-BMAL1 heterodimer mediated transcriptional activation of PER1. The heterodimer ARNT:AHR binds to core DNA sequence 5'-TGCGTG-3' within the dioxin response element (DRE) of target gene promoters and activates their transcription. This is Aryl hydrocarbon receptor (Ahr) from Mus musculus castaneus (Southeastern Asian house mouse).